Here is a 253-residue protein sequence, read N- to C-terminus: Histone-arginine methyltransferase METTL23 (253 aa).

Residues 1 to 23 (MDSVRPRAPWAPPPDPASLDSPT) are disordered.

The protein belongs to the methyltransferase superfamily. METTL23 family. Interacts with HSPA5, HSP90B1, TUBULIN, UGGT1 and UGGT2. Interacts with TET3. Interacts with STPG4. Ubiquitously expressed.

The protein resides in the nucleus. Its subcellular location is the cytoplasm. It catalyses the reaction L-arginyl-[protein] + 2 S-adenosyl-L-methionine = N(omega),N(omega)-dimethyl-L-arginyl-[protein] + 2 S-adenosyl-L-homocysteine + 2 H(+). In terms of biological role, histone methyltransferase that dimethylates histone H3 at 'Arg-17', forming asymmetric dimethylarginine (H3R17me2a), leading to activate transcription via chromatin remodeling. Maternal factor involved in epigenetic chromatin reprogramming of the paternal genome in the zygote: mediates H3R17me2a, promoting histone H3.3 incorporation in the male pronucleus, leading to TET3 recruitment and subsequent DNA demethylation. The protein is Histone-arginine methyltransferase METTL23 of Mus musculus (Mouse).